Consider the following 392-residue polypeptide: MAALRQPQVAELLAEARRAFREEFGAEPELAVSAPGRVNLIGEHTDYNQGLVLPMALELMTVLVGSPRKDGLVSLLTTSEGADEPQRLQFPLPTAQRSLEPGTPRWANYVKGVIQYYPAAPLPGFSAVVVSSVPLGGGLSSSASLEVATYTFLQQLCPDSGTIAARAQVCQQAEHSFAGMPCGIMDQFISLMGQKGHALLIDCRSLETSLVPLSDPKLAVLITNSNVRHSLASSEYPVRRRQCEEVARALGKESLREVQLEELEAARDLVSKEGFRRARHVVGEIRRTAQAAAALRRGDYRAFGRLMVESHRSLRDDYEVSCPELDQLVEAALAVPGVYGSRMTGGGFGGCTVTLLEASAAPHAMRHIQEHYGGTATFYLSQAADGAKVLCL.

4 residues coordinate alpha-D-galactose: Arg37, Glu43, His44, and Asp46. Positions 136, 138, 140, and 141 each coordinate ATP. Alpha-D-galactose is bound at residue Asp186. Asp186 acts as the Proton acceptor in catalysis. Residue Ser230 is modified to Phosphoserine. Tyr236 is a binding site for alpha-D-galactose.

The protein belongs to the GHMP kinase family. GalK subfamily. In terms of assembly, homodimer.

The enzyme catalyses alpha-D-galactose + ATP = alpha-D-galactose 1-phosphate + ADP + H(+). The protein operates within carbohydrate metabolism; galactose metabolism. Its function is as follows. Catalyzes the transfer of a phosphate from ATP to alpha-D-galactose and participates in the first committed step in the catabolism of galactose. The protein is Galactokinase of Homo sapiens (Human).